A 154-amino-acid chain; its full sequence is Decarboxylase claH (154 aa).

This sequence belongs to the tpcK family.

It carries out the reaction atrochrysone carboxylate + H(+) = atrochrysone + CO2. Its pathway is pigment biosynthesis. Its function is as follows. Decarboxylase involved in the biosynthesis of the bianthraquinone cladofulvin, a conidial pigment not required for virulence but that plays a role in fitness and resistance to environmental stresses including UV light and low-temperature stress. The pathway begins with the synthesis of atrochrysone thioester by the polyketide synthase (PKS) claG. The atrochrysone carboxyl ACP thioesterase claF then breaks the thioester bond and releases the atrochrysone carboxylic acid from claG. This compound is decarboxylated by claH to yield emodin, which is further converted to chrysophanol hydroquinone by the reductase claC and the dehydratase claB. The cytochrome monooxygenase P450 claM then catalyzes the dimerization of nataloe-emodin to cladofulvin. This Passalora fulva (Tomato leaf mold) protein is Decarboxylase claH.